The following is a 251-amino-acid chain: uncharacterized protein (251 aa).

10-34 contributes to the NADP(+) binding site; the sequence is ITGAGSGIGKKAAVMFAERGAKVAI. Ser139 is a binding site for substrate. Residue Tyr152 is the Proton acceptor of the active site.

The protein belongs to the short-chain dehydrogenases/reductases (SDR) family.

This is an uncharacterized protein from Thermotoga maritima (strain ATCC 43589 / DSM 3109 / JCM 10099 / NBRC 100826 / MSB8).